The sequence spans 826 residues: Putative ankyrin repeat protein RBE_0220 (826 aa).

ANK repeat units lie at residues 308–337 (LGTSLLAVTVRNNNVELTKALLNKGADQHA), 342–371 (IDMSLLYIACLNKSVDIAKLLLEYNVDPNY), 375–404 (DNDTPLLQACEKKSPELVKALLAKNADPNK), 445–474 (NDFTPLILACYNNSERVVQALLDKEADVNA), 478–507 (DGFTPLFAAYRNHSTKITELLLEKGANPDV), 512–541 (TKSSILYNACNEGDLNIIKLLLKHKANPNL), 545–574 (DGTTPLMAACEKGDLEIAALLLKNGADINK), and 578–607 (NGDNALFLACKNGNLELVKMLVENGVDLKK).

This Rickettsia bellii (strain RML369-C) protein is Putative ankyrin repeat protein RBE_0220.